The following is a 147-amino-acid chain: NADH-quinone oxidoreductase subunit A (147 aa).

3 consecutive transmembrane segments (helical) span residues 16–36, 68–88, and 97–117; these read FAIF…GGWF, FYLV…LFAW, and WVGF…LVYL.

This sequence belongs to the complex I subunit 3 family. In terms of assembly, NDH-1 is composed of 13 different subunits. Subunits NuoA, H, J, K, L, M, N constitute the membrane sector of the complex.

The protein resides in the cell inner membrane. It carries out the reaction a quinone + NADH + 5 H(+)(in) = a quinol + NAD(+) + 4 H(+)(out). Functionally, NDH-1 shuttles electrons from NADH, via FMN and iron-sulfur (Fe-S) centers, to quinones in the respiratory chain. The immediate electron acceptor for the enzyme in this species is believed to be ubiquinone. Couples the redox reaction to proton translocation (for every two electrons transferred, four hydrogen ions are translocated across the cytoplasmic membrane), and thus conserves the redox energy in a proton gradient. This Salmonella paratyphi A (strain ATCC 9150 / SARB42) protein is NADH-quinone oxidoreductase subunit A.